A 760-amino-acid chain; its full sequence is MSPKKVQIKVEEKEDETEESSSEEEEEVEDKLPRRESLRPKRKRTRDVINEDDPEPEPEDEETRKAREKERRRRLKRGAEEEEIDEEELERLKAELDEKRQIIATVKCKPWKMEKKIEVLKEAKKFVSENEGALGKGKGKRWFAFKMMMAKKWAKFLRDFENFKAACVPWENKIKAIESQFGSSVASYFLFLRWMYGVNMVLFILTFSLIMLPEYLWGLPYGSLPRKTVPRAEEASAANFGVLYDFNGLAQYSVLFYGYYDNKRTIGWMNFRLPLSYFLVGIMCIGYSFLVVLKAMTKNIGDDGGGDDNTFNFSWKVFTSWDYLIGNPETADNKFNSITMNFKEAITEEKAAQVEENVHLIRFLRFLANFFVFLTLGGSGYLIFWAVKRSQEFAQQDPDTLGWWEKNEMNMVMSLLGMFCPTLFDLFAELEDYHPLIALKWLLGRIFALLLGNLYVFILALMDEINNKIEEEKLVKANITLWEANMIKAYNASFSENSTGPPFFVHPADVPRGPCWETMVGQEFVRLTVSDVLTTYVTILIGDFLRACFVRFCNYCWCWDLEYGYPSYTEFDISGNVLALIFNQGMIWMGSFFAPSLPGINILRLHTSMYFQCWAVMCCNVPEARVFKASRSNNFYLGMLLLILFLSTMPVLYMIVSLPPSFDCGPFSGKNRMFEVIGETLEHDFPSWMAKILRQLSNPGLVIAVILVMVLAIYYLNATAKGQKAANLDLKKKMKMQALENKMRNKKMAAARAAAAAGRQ.

Positions 1 to 80 (MSPKKVQIKV…RRRRLKRGAE (80 aa)) are disordered. Over 1-182 (MSPKKVQIKV…KIKAIESQFG (182 aa)) the chain is Cytoplasmic. Acidic residues predominate over residues 13–29 (KEDETEESSSEEEEEVE). Over residues 30-39 (DKLPRRESLR) the composition is skewed to basic and acidic residues. Ser-37 bears the Phosphoserine mark. Position 45 is a phosphothreonine (Thr-45). Positions 50–61 (NEDDPEPEPEDE) are enriched in acidic residues. Ser-128 is subject to Phosphoserine. Residues 183–220 (SSVASYFLFLRWMYGVNMVLFILTFSLIMLPEYLWGLP) traverse the membrane as a helical segment. Topologically, residues 221 to 271 (YGSLPRKTVPRAEEASAANFGVLYDFNGLAQYSVLFYGYYDNKRTIGWMNF) are extracellular. A helical membrane pass occupies residues 272-303 (RLPLSYFLVGIMCIGYSFLVVLKAMTKNIGDD). The Cytoplasmic segment spans residues 304–359 (GGGDDNTFNFSWKVFTSWDYLIGNPETADNKFNSITMNFKEAITEEKAAQVEENVH). Ser-314 carries the phosphoserine modification. The helical transmembrane segment at 360–390 (LIRFLRFLANFFVFLTLGGSGYLIFWAVKRS) threads the bilayer. Residues 391-402 (QEFAQQDPDTLG) lie on the Extracellular side of the membrane. Residue Thr-400 is modified to Phosphothreonine. The helical transmembrane segment at 403 to 430 (WWEKNEMNMVMSLLGMFCPTLFDLFAEL) threads the bilayer. Residues 431 to 434 (EDYH) lie on the Cytoplasmic side of the membrane. A helical transmembrane segment spans residues 435-469 (PLIALKWLLGRIFALLLGNLYVFILALMDEINNKI). The Extracellular segment spans residues 470–515 (EEEKLVKANITLWEANMIKAYNASFSENSTGPPFFVHPADVPRGPC). The helical transmembrane segment at 516-553 (WETMVGQEFVRLTVSDVLTTYVTILIGDFLRACFVRFC) threads the bilayer. Residues 554–572 (NYCWCWDLEYGYPSYTEFD) lie on the Cytoplasmic side of the membrane. Residues 573–593 (ISGNVLALIFNQGMIWMGSFF) form a helical membrane-spanning segment. Over 594-596 (APS) the chain is Extracellular. The chain crosses the membrane as a helical span at residues 597 to 619 (LPGINILRLHTSMYFQCWAVMCC). Residues 620–633 (NVPEARVFKASRSN) lie on the Cytoplasmic side of the membrane. Residues 634-657 (NFYLGMLLLILFLSTMPVLYMIVS) form a helical membrane-spanning segment. Topologically, residues 658-700 (LPPSFDCGPFSGKNRMFEVIGETLEHDFPSWMAKILRQLSNPG) are extracellular. The helical transmembrane segment at 701–734 (LVIAVILVMVLAIYYLNATAKGQKAANLDLKKKM) threads the bilayer. Topologically, residues 735–760 (KMQALENKMRNKKMAAARAAAAAGRQ) are cytoplasmic.

It belongs to the TMC family. Forms the MET channel complosed of TMC dimer (TMC1 or TMC2), TMIE, TOMT, CIB (CIB2 or CIB3), LHFPL5 and PDH15. The interaction of TMC1 and TMC2 with TOMT is required for the transportation of TMC1/2 into the stereocilia of hair cells. Interacts (via N-terminus) with both isoforms CD1 and CD3 of PCDH15. Can form a heterodimer with TMC2, TMC5 or TMC7. In terms of tissue distribution, detected in fetal cochlea, and at low levels in placenta and testis.

Its subcellular location is the cell membrane. It catalyses the reaction Ca(2+)(in) = Ca(2+)(out). In terms of biological role, pore-forming subunit of the mechanotransducer (MET) non-selective cation channel complex located at the tips of stereocilia of cochlear hair cells and that mediates sensory transduction in the auditory system. The MET complex is composed of two dimeric pore-forming ion-conducting transmembrane TMC (TMC1 or TMC2) subunits, and aided by several auxiliary proteins including LHFPL5, TMIE, CIB2/3 and TOMT, and the tip-link PCDH15. MET channel is activated by tension in the tip-link extending from the side wall of one stereocilium to the tip of the adjacent shorter stereocilium, where the channel is located. TMC1 MET channel is highly permeable to calcium and likely transports monovalent cations. Also involved in vestibular hair cells transduction current. In Homo sapiens (Human), this protein is Transmembrane channel-like protein 1.